A 124-amino-acid polypeptide reads, in one-letter code: Ribonuclease pancreatic (124 aa).

The span at 1 to 13 shows a compositional bias: basic and acidic residues; it reads KETAAEKFQRQHM. Positions 1 to 21 are disordered; sequence KETAAEKFQRQHMDTSSSLSN. The substrate site is built by K7 and R10. H12 (proton acceptor) is an active-site residue. Disulfide bonds link C26/C84, C40/C95, C58/C110, and C65/C72. N34 carries an N-linked (GlcNAc...) asparagine glycan. Substrate contacts are provided by residues 41–45, K66, and R85; that span reads KPVNT. Residue H119 is the Proton donor of the active site.

The protein belongs to the pancreatic ribonuclease family. Monomer. Interacts with and forms tight 1:1 complexes with RNH1. Dimerization of two such complexes may occur. Interaction with RNH1 inhibits this protein. As to expression, pancreas.

Its subcellular location is the secreted. It carries out the reaction an [RNA] containing cytidine + H2O = an [RNA]-3'-cytidine-3'-phosphate + a 5'-hydroxy-ribonucleotide-3'-[RNA].. The enzyme catalyses an [RNA] containing uridine + H2O = an [RNA]-3'-uridine-3'-phosphate + a 5'-hydroxy-ribonucleotide-3'-[RNA].. Endonuclease that catalyzes the cleavage of RNA on the 3' side of pyrimidine nucleotides. Acts on single-stranded and double-stranded RNA. This Hippopotamus amphibius (Hippopotamus) protein is Ribonuclease pancreatic (RNASE1).